The chain runs to 578 residues: Interleukin-10 receptor subunit alpha (578 aa).

Residues Met1–Ala21 form the signal peptide. Residues His22 to Asn235 lie on the Extracellular side of the membrane. N-linked (GlcNAc...) asparagine glycans are attached at residues Asn50, Asn74, Asn110, Asn154, Asn177, and Asn189. Cys56 and Cys75 are oxidised to a cystine. A disulfide bridge links Cys202 with Cys223. Residues Val236–Leu256 form a helical membrane-spanning segment. The Cytoplasmic segment spans residues Gln257–Glu578. The interval Leu313–Glu436 is disordered. Over residues Ser316–Glu332 the composition is skewed to polar residues. Positions Asp318–Ser323 match the BTRC recognition motif motif. Residues Gly357 to Gly371 show a composition bias toward low complexity. The span at Pro377 to Arg396 shows a compositional bias: polar residues.

It belongs to the type II cytokine receptor family. In terms of assembly, interacts with IL10. Interacts with IL10RB. Interacts (via its cytoplasmic domain) with JAK1 (via N-terminus). Interacts with BTRC; this interaction leads to IL10RA ubiquitination and subsequent degradation. Interacts with STAT3. (Microbial infection) Interacts with human cytomegalovirus protein IL10. As to quaternary structure, (Microbial infection) Interacts with Epstein-Barr virus protein IL10. Phosphorylated. Phosphorylation of the cytoplasmic tail induced STAT3 activation. In terms of processing, ubiquitinated by BTRC; ubiquitination leads to endocytosis and subsequent degradation of IL10RA. As to expression, primarily expressed in hematopoetic cells including B-cells, T-cells, NK cells, monocytes and macrophages. Not expressed in non-hematopoetic cells such as fibroblasts or endothelial cells.

The protein resides in the cell membrane. It localises to the cytoplasm. Functionally, cell surface receptor for the cytokine IL10 that participates in IL10-mediated anti-inflammatory functions, limiting excessive tissue disruption caused by inflammation. Upon binding to IL10, induces a conformational change in IL10RB, allowing IL10RB to bind IL10 as well. In turn, the heterotetrameric assembly complex, composed of two subunits of IL10RA and IL10RB, activates the kinases JAK1 and TYK2 that are constitutively associated with IL10RA and IL10RB respectively. These kinases then phosphorylate specific tyrosine residues in the intracellular domain in IL10RA leading to the recruitment and subsequent phosphorylation of STAT3. Once phosphorylated, STAT3 homodimerizes, translocates to the nucleus and activates the expression of anti-inflammatory genes. In addition, IL10RA-mediated activation of STAT3 inhibits starvation-induced autophagy. This is Interleukin-10 receptor subunit alpha (IL10RA) from Homo sapiens (Human).